A 249-amino-acid chain; its full sequence is Microvitellogenin (249 aa).

The first 17 residues, 1 to 17 (MLRTTVVLLTLAAIAFA), serve as a signal peptide directing secretion.

In terms of biological role, small vitellogenic protein found in females. It is synthesized in the fat body, secreted into the hemolymph, and taken up by developing oocytes. The protein is Microvitellogenin (MVG) of Manduca sexta (Tobacco hawkmoth).